The primary structure comprises 1150 residues: uncharacterized protein (1150 aa).

This sequence belongs to the TMEM1 family.

This is an uncharacterized protein from Schizosaccharomyces pombe (strain 972 / ATCC 24843) (Fission yeast).